We begin with the raw amino-acid sequence, 441 residues long: C4-dicarboxylate transport protein (441 aa).

8 consecutive transmembrane segments (helical) span residues 9–29 (SLYF…HFMP), 45–65 (LVKM…IAGM), 79–99 (LLYF…VVNV), 145–165 (AFAE…GFAL), 187–207 (FAAI…AMAF), 220–240 (LAAL…LVLG), 308–328 (IYLT…LTLT), and 356–376 (AATL…ILGI).

This sequence belongs to the dicarboxylate/amino acid:cation symporter (DAACS) (TC 2.A.23) family.

Its subcellular location is the cell inner membrane. Responsible for the transport of dicarboxylates such as succinate, fumarate, and malate from the periplasm across the membrane. The protein is C4-dicarboxylate transport protein of Laribacter hongkongensis (strain HLHK9).